We begin with the raw amino-acid sequence, 63 residues long: Protein DsrB (63 aa).

This sequence belongs to the DsrB family.

The polypeptide is Protein DsrB (Yersinia pseudotuberculosis serotype O:3 (strain YPIII)).